The primary structure comprises 365 residues: Phosphoserine aminotransferase (365 aa).

An L-glutamate-binding site is contributed by Arg-42. Pyridoxal 5'-phosphate-binding positions include 76 to 77, Trp-102, Thr-156, Asp-175, and Gln-198; that span reads GR. Lys-199 carries the N6-(pyridoxal phosphate)lysine modification. 240 to 241 lines the pyridoxal 5'-phosphate pocket; it reads NT.

The protein belongs to the class-V pyridoxal-phosphate-dependent aminotransferase family. SerC subfamily. In terms of assembly, homodimer. It depends on pyridoxal 5'-phosphate as a cofactor.

It is found in the cytoplasm. The enzyme catalyses O-phospho-L-serine + 2-oxoglutarate = 3-phosphooxypyruvate + L-glutamate. It catalyses the reaction 4-(phosphooxy)-L-threonine + 2-oxoglutarate = (R)-3-hydroxy-2-oxo-4-phosphooxybutanoate + L-glutamate. The protein operates within amino-acid biosynthesis; L-serine biosynthesis; L-serine from 3-phospho-D-glycerate: step 2/3. Its pathway is cofactor biosynthesis; pyridoxine 5'-phosphate biosynthesis; pyridoxine 5'-phosphate from D-erythrose 4-phosphate: step 3/5. Functionally, catalyzes the reversible conversion of 3-phosphohydroxypyruvate to phosphoserine and of 3-hydroxy-2-oxo-4-phosphonooxybutanoate to phosphohydroxythreonine. The chain is Phosphoserine aminotransferase from Shewanella oneidensis (strain ATCC 700550 / JCM 31522 / CIP 106686 / LMG 19005 / NCIMB 14063 / MR-1).